We begin with the raw amino-acid sequence, 313 residues long: Dioxygenase swnH2 (313 aa).

The Fe cation site is built by histidine 155, aspartate 157, and histidine 232.

Belongs to the PhyH family. As to quaternary structure, homodimer. The cofactor is Fe cation.

It functions in the pathway mycotoxin biosynthesis. Its function is as follows. Aminotransferase; part of the gene cluster that mediates the biosynthesis of swainsonine (SW), a cytotoxic fungal alkaloid and a potential cancer therapy drug. Swainsonine production occurs via a multibranched pathway and is dispensable for fungal colonization of plants and infection of insect hosts. The first step of swainsonine biosynthesis is the production of the precursor pipecolic acid (PA) via conversion of L-lysine (Lys) to 1-piperideine-6-carboxylate (P6C) by the aminotransferase swnA, the latter being further reduced to PA by the reductase swnR. The PKS-NRPS hybrid synthetase swnK uptakes and condensates PA and malonyl-CoA with and without skipping of the ketoreductase (KR) domain in order to produce 3 intermediates, 1-oxoindolizidine, (1S)-1-hydroxyindolizin, and (1R)-1-hydroxyindolizine; with the transisomer (1S)-1-hydroxyindolizin being predominant. The terminal thioester reductase (TE) domain of swnK is involved in reduction of the thioester bond to release the intermediate aldehydes. The oxidoreductase swnN could contribute to the reduction of 1-oxoindolizidine to (1S)-1-hydroxyindolizin and (1R)-1-hydroxyindolizine, contributing to the major route of SW production. The dioxygenase swnH2 would be responsible for the oxidization of (1R)-1-hydroxyindolizine into (1R,2S)-1,2-dihydroxyindolizine and of (1S)-1-hydroxyindolizin to yield both (1R,2S)-1,2-dihydroxyindolizine and (1S,2S)-1,2-dihydroxyindolizine. The dioxygenase swnH1 then performs the conversion of the 1,2-dihydroxyindolizine epimers to SW. The chain is Dioxygenase swnH2 from Arthroderma benhamiae (strain ATCC MYA-4681 / CBS 112371) (Trichophyton mentagrophytes).